Consider the following 204-residue polypeptide: MVIRHLEYLGPMATIDGWRPEITLPEIAFVGRSNVGKSSLLNKLMRRKSFARVSTTPGRTREIHFFDVNHQFVLADLPGYGYARISKERKAEWRPLIEGYLGTSPRLQGVVQLLDVRHDPTNDDYVMMDFLADVGVPTIVAITKIDKLKPAQARARVEELSKRLGLDADQVVPFSAHTGAGRDELASALMQLLAMPDWRTTEEE.

An EngB-type G domain is found at 23-195 (TLPEIAFVGR…ASALMQLLAM (173 aa)). GTP-binding positions include 31 to 38 (GRSNVGKS), 58 to 62 (GRTRE), 76 to 79 (DLPG), 143 to 146 (TKID), and 174 to 176 (FSA). Residues Ser-38 and Thr-60 each coordinate Mg(2+).

This sequence belongs to the TRAFAC class TrmE-Era-EngA-EngB-Septin-like GTPase superfamily. EngB GTPase family. The cofactor is Mg(2+).

Its function is as follows. Necessary for normal cell division and for the maintenance of normal septation. The sequence is that of Probable GTP-binding protein EngB from Gemmatimonas aurantiaca (strain DSM 14586 / JCM 11422 / NBRC 100505 / T-27).